The sequence spans 360 residues: Protein Wnt-2 (360 aa).

Residues 1-25 (MNSPLRGIWLWLPLLLTWLTPEVSS) form the signal peptide. 11 cysteine pairs are disulfide-bonded: C76/C87, C127/C135, C137/C157, C206/C220, C208/C215, C278/C309, C294/C304, C308/C348, C324/C339, C326/C336, and C331/C332. S212 carries the O-palmitoleoyl serine; by PORCN lipid modification. A glycan (N-linked (GlcNAc...) asparagine) is linked at N295.

This sequence belongs to the Wnt family. In terms of processing, palmitoleoylation is required for efficient binding to frizzled receptors. Depalmitoleoylation leads to Wnt signaling pathway inhibition.

It is found in the secreted. The protein localises to the extracellular space. It localises to the extracellular matrix. Functionally, ligand for members of the frizzled family of seven transmembrane receptors. Functions in the canonical Wnt signaling pathway that results in activation of transcription factors of the TCF/LEF family. Functions as a upstream regulator of FGF10 expression. Plays an important role in embryonic lung development. May contribute to embryonic brain development by regulating the proliferation of dopaminergic precursors and neurons. This chain is Protein Wnt-2 (WNT2), found in Callithrix jacchus (White-tufted-ear marmoset).